The primary structure comprises 67 residues: DNA-directed RNA polymerase subunit omega (67 aa).

It belongs to the RNA polymerase subunit omega family. The RNAP catalytic core consists of 2 alpha, 1 beta, 1 beta' and 1 omega subunit. When a sigma factor is associated with the core the holoenzyme is formed, which can initiate transcription.

It catalyses the reaction RNA(n) + a ribonucleoside 5'-triphosphate = RNA(n+1) + diphosphate. Promotes RNA polymerase assembly. Latches the N- and C-terminal regions of the beta' subunit thereby facilitating its interaction with the beta and alpha subunits. The protein is DNA-directed RNA polymerase subunit omega of Bordetella avium (strain 197N).